Reading from the N-terminus, the 148-residue chain is Arginine repressor (148 aa).

Belongs to the ArgR family.

The protein resides in the cytoplasm. Its pathway is amino-acid biosynthesis; L-arginine biosynthesis [regulation]. Regulates arginine biosynthesis genes. The chain is Arginine repressor from Koribacter versatilis (strain Ellin345).